The sequence spans 255 residues: MASATATTSAADLAAVKVVLLDIEGTVCPISFVKDVLFPYALQALPVTLDKKWDSPDFAPYRNAFPEPAASSRPVFEAHVADLVKRDVKVSYLKALQGYLWLAGYESGDIKAPLFPDVSPSMRAWHDAGIKLIIYSSGSVPAQKLLFGHTNASPPSLIPIISDWFDTVNAGMKMESSSYTSILSRYPDTQPQEWLFLSDNVDEVSAARAAGMHSLVVVRPGNAPLPECHVGEGQAVQTFEGLAVGGKRNESSKSS.

Mg(2+) contacts are provided by D22 and E24. Residues 136 to 137 and K173 contribute to the substrate site; that span reads SS. D199 provides a ligand contact to Mg(2+).

The protein belongs to the HAD-like hydrolase superfamily. MasA/MtnC family. In terms of assembly, monomer. Requires Mg(2+) as cofactor.

It is found in the cytoplasm. The protein localises to the nucleus. The catalysed reaction is 5-methylsulfanyl-2,3-dioxopentyl phosphate + H2O = 1,2-dihydroxy-5-(methylsulfanyl)pent-1-en-3-one + phosphate. It functions in the pathway amino-acid biosynthesis; L-methionine biosynthesis via salvage pathway; L-methionine from S-methyl-5-thio-alpha-D-ribose 1-phosphate: step 3/6. The protein operates within amino-acid biosynthesis; L-methionine biosynthesis via salvage pathway; L-methionine from S-methyl-5-thio-alpha-D-ribose 1-phosphate: step 4/6. In terms of biological role, bifunctional enzyme that catalyzes the enolization of 2,3-diketo-5-methylthiopentyl-1-phosphate (DK-MTP-1-P) into the intermediate 2-hydroxy-3-keto-5-methylthiopentenyl-1-phosphate (HK-MTPenyl-1-P), which is then dephosphorylated to form the acireductone 1,2-dihydroxy-3-keto-5-methylthiopentene (DHK-MTPene). The sequence is that of Enolase-phosphatase E1 from Verticillium alfalfae (strain VaMs.102 / ATCC MYA-4576 / FGSC 10136) (Verticillium wilt of alfalfa).